We begin with the raw amino-acid sequence, 98 residues long: Homeobox protein SMOX-4 (98 aa).

The segment at residues 37 to 96 (SFRNRTAFTDYQLICLEREFSHIQYLSRIDRIHLAQNLNLTEKQVKIWFQNRRVRWRKRN) is a DNA-binding region (homeobox).

Its subcellular location is the nucleus. The polypeptide is Homeobox protein SMOX-4 (SMOX-4) (Schistosoma mansoni (Blood fluke)).